The chain runs to 199 residues: Recombination protein RecR (199 aa).

The C4-type zinc finger occupies 57–72; that stretch reads CSICGNITDEDPCAIC. Residues 80 to 176 form the Toprim domain; the sequence is STILVVEQPK…KVTRLAHGLS (97 aa).

It belongs to the RecR family.

Its function is as follows. May play a role in DNA repair. It seems to be involved in an RecBC-independent recombinational process of DNA repair. It may act with RecF and RecO. This Lacticaseibacillus casei (strain BL23) (Lactobacillus casei) protein is Recombination protein RecR.